Reading from the N-terminus, the 219-residue chain is MSHPQSRPGGRDGRPRRRREPREEAPWVPKTALGKRVNAGEITSLEEIQEAGARIQESGIIKKLLPDLKTEVVDVGIIQKMTSNGQSTRFKAIVAAGNENGYLGIGQGKAKQMRIAIEKANNQALLNVGPIKLGCGSWECRCDQKHSVPFKVRGKGGSVVIEILPAPRGLGLVAGGKIRRLLELAGLKDAYTTAKGSTPTTNSTSKAVLECLRQTFSQG.

The tract at residues 1 to 32 is disordered; the sequence is MSHPQSRPGGRDGRPRRRREPREEAPWVPKTA. Positions 68-131 constitute an S5 DRBM domain; the sequence is LKTEVVDVGI…NQALLNVGPI (64 aa).

This sequence belongs to the universal ribosomal protein uS5 family. As to quaternary structure, part of the 30S ribosomal subunit. Contacts protein S4.

In terms of biological role, with S4 and S12 plays an important role in translational accuracy. The protein is Small ribosomal subunit protein uS5 (rps5) of Cenarchaeum symbiosum (strain A).